Consider the following 609-residue polypeptide: tRNA uridine 5-carboxymethylaminomethyl modification enzyme MnmG (609 aa).

Residues 11 to 16 (GAGHAG), valine 123, and threonine 178 each bind FAD. 270–284 (GPRYCPSIEDKVVRF) lines the NAD(+) pocket. Residue glutamine 367 coordinates FAD.

It belongs to the MnmG family. In terms of assembly, homodimer. Heterotetramer of two MnmE and two MnmG subunits. It depends on FAD as a cofactor.

It localises to the cytoplasm. In terms of biological role, NAD-binding protein involved in the addition of a carboxymethylaminomethyl (cmnm) group at the wobble position (U34) of certain tRNAs, forming tRNA-cmnm(5)s(2)U34. The polypeptide is tRNA uridine 5-carboxymethylaminomethyl modification enzyme MnmG (Mycoplasmopsis synoviae (strain 53) (Mycoplasma synoviae)).